A 152-amino-acid polypeptide reads, in one-letter code: Small ribosomal subunit protein uS15 (152 aa).

Basic residues predominate over residues 1–10; the sequence is MARMYARRRG. A disordered region spans residues 1-24; that stretch reads MARMYARRRGTSSSVRPYRKEAPE.

It belongs to the universal ribosomal protein uS15 family. In terms of assembly, part of the 30S ribosomal subunit.

This is Small ribosomal subunit protein uS15 from Methanoculleus marisnigri (strain ATCC 35101 / DSM 1498 / JR1).